A 705-amino-acid polypeptide reads, in one-letter code: Polyribonucleotide nucleotidyltransferase (705 aa).

Mg(2+) is bound by residues Asp-487 and Asp-493. One can recognise a KH domain in the interval 554–613 (PKILTMKINPDKIRDVIGPSGKQINKIIEDTGVKIDIEQDGTIFISSTEEDMNQKAKKII). The S1 motif domain occupies 623-691 (GQLYLGKVKR…KQGRVNLSRK (69 aa)).

It belongs to the polyribonucleotide nucleotidyltransferase family. Mg(2+) serves as cofactor.

The protein localises to the cytoplasm. It catalyses the reaction RNA(n+1) + phosphate = RNA(n) + a ribonucleoside 5'-diphosphate. Its function is as follows. Involved in mRNA degradation. Catalyzes the phosphorolysis of single-stranded polyribonucleotides processively in the 3'- to 5'-direction. The polypeptide is Polyribonucleotide nucleotidyltransferase (Bacillus pumilus (strain SAFR-032)).